A 405-amino-acid polypeptide reads, in one-letter code: Lariat debranching enzyme (405 aa).

A divalent metal cation is bound by residues C11, H13, D40, and N85. Positions 125–159 are lariat recognition loop; sequence SGIWKEWDFNKQRPDWNDLENNNWKANIRNLYHVR. Residues H179, H231, and H233 each contribute to the a divalent metal cation site. The disordered stretch occupies residues 242–277; sequence HNKRSHEPPNKSTSKTKKNNNEIDLDLSSDEDERSG. Residues 264–274 show a composition bias toward acidic residues; sequence IDLDLSSDEDE. Residue S269 is modified to Phosphoserine.

The protein belongs to the lariat debranching enzyme family. The cofactor is Fe(2+). Requires Zn(2+) as cofactor. Mn(2+) serves as cofactor.

It localises to the nucleus. It is found in the cytoplasm. Its activity is regulated as follows. Active in presence of diverse metals including Fe(2+), Zn(2+) and Mn(2+). Binds two metal cations in two adjacent alpha and beta metal-binding pockets. The activity is the highest with Fe(2+) bound to the 2 metal-binding sites. Activity is low with Zn(2+) and Mn(2+). Cleaves the 2'-5' phosphodiester linkage at the branch point of lariat intron pre-mRNAs after splicing and converts them into linear molecules that are subsequently degraded, thereby facilitating ribonucleotide turnover. It also participates in Ty1 retrovirus-like transposition via an RNA lariat intermediate in cDNA synthesis. The protein is Lariat debranching enzyme (DBR1) of Saccharomyces cerevisiae (strain ATCC 204508 / S288c) (Baker's yeast).